The primary structure comprises 1132 residues: Phycobiliprotein ApcE (1132 aa).

Residue cysteine 196 coordinates (2R,3E)-phycocyanobilin. PBS-linker domains are found at residues 253-433 (DQQG…FRKV), 514-692 (LGPK…EKQE), 709-887 (PDID…KQNN), and 940-1121 (GRGQ…SSLS).

The protein belongs to the phycobilisome linker protein family. In terms of assembly, heterodimer of ApcF (a variant beta-allophycocyanin). Phycobilisomes of this organism are composed of a two cylinder core, from which six rods radiate. The core is mainly composed of allophycocyanin alpha and beta chains and of minor components. Contains one covalently linked bilin chromophore. This protein autochromophorylates.

It is found in the cellular thylakoid membrane. This protein is postulated to act both as terminal energy acceptor (by its phycobilin-like domains) and as a linker polypeptide (by its repeats and arms) that stabilizes the phycobilisome core architecture. Has intrinsic bilin lyase activity. This is Phycobiliprotein ApcE (apcE) from Nostoc sp. (strain PCC 7120 / SAG 25.82 / UTEX 2576).